A 445-amino-acid chain; its full sequence is Enolase 1 (445 aa).

Substrate contacts are provided by histidine 164 and glutamate 173. The active-site Proton donor is glutamate 216. Mg(2+)-binding residues include aspartate 251, glutamate 301, and aspartate 328. Positions 301 and 328 each coordinate substrate. The active-site Proton acceptor is lysine 353. Substrate-binding positions include 380–383 (SHRS) and lysine 404.

Belongs to the enolase family. In terms of assembly, homodimer. Requires Mg(2+) as cofactor.

Its subcellular location is the cytoplasm. It catalyses the reaction (2R)-2-phosphoglycerate = phosphoenolpyruvate + H2O. The protein operates within carbohydrate degradation; glycolysis; pyruvate from D-glyceraldehyde 3-phosphate: step 4/5. The sequence is that of Enolase 1 (ENO1) from Hevea brasiliensis (Para rubber tree).